The sequence spans 474 residues: Gamma-aminobutyric acid receptor subunit gamma-2 (474 aa).

The N-terminal stretch at 1 to 38 (MSSPNTWSIGSSVYSPVFSQKMTLWILLLLSLYPGFTS) is a signal peptide. Over 39-274 (QKSDDDYEDY…FDLSRRMGYF (236 aa)) the chain is Extracellular. Asparagine 51 and asparagine 128 each carry an N-linked (GlcNAc...) asparagine glycan. A disulfide bridge connects residues cysteine 189 and cysteine 203. Residue asparagine 246 is glycosylated (N-linked (GlcNAc...) asparagine). Residues 275–295 (TIQTYIPCTLIVVLSWVSFWI) form a helical membrane-spanning segment. The Cytoplasmic portion of the chain corresponds to 296-301 (NKDAVP). A helical transmembrane segment spans residues 302–321 (ARTSLGITTVLTMTTLSTIA). Over 322-333 (RKSLPKVSYVTA) the chain is Extracellular. The chain crosses the membrane as a helical span at residues 334–358 (MDLFVSVCFIFVFSALVEYGTLHYF). At 359–450 (VSNRKPSKDK…IHIRIAKMDS (92 aa)) the chain is on the cytoplasmic side. Serine 381 is subject to Phosphoserine; by PKC. Residues 451–472 (YARIFFPTAFCLFNLVYWVSYL) form a helical membrane-spanning segment. Residues 473–474 (YL) lie on the Extracellular side of the membrane.

Belongs to the ligand-gated ion channel (TC 1.A.9) family. Gamma-aminobutyric acid receptor (TC 1.A.9.5) subfamily. GABRG2 sub-subfamily. Heteropentamer, formed by a combination of alpha (GABRA1-6), beta (GABRB1-3), gamma (GABRG1-3), delta (GABRD), epsilon (GABRE), rho (GABRR1-3), pi (GABRP) and theta (GABRQ) chains, each subunit exhibiting distinct physiological and pharmacological properties. Interacts with GABARAP. Interacts with KIF21B. Identified in a complex of 720 kDa composed of LHFPL4, NLGN2, GABRA1, GABRB2, GABRG2 and GABRB3. Interacts with LHFPL4. Interacts with SHISA7; interaction leads to the regulation of GABA(A) receptor trafficking, channel deactivation kinetics and pharmacology. Post-translationally, glycosylated. Palmitoylated by ZDHHC3/GODZ; required for the accumulation of GABA(A) receptors at the postsynaptic membrane of inhibitory GABAergic synapses. In terms of tissue distribution, expressed in brain neurons (at protein level).

The protein localises to the postsynaptic cell membrane. The protein resides in the cell membrane. It localises to the cell projection. Its subcellular location is the dendrite. It is found in the cytoplasmic vesicle membrane. The enzyme catalyses chloride(in) = chloride(out). Its activity is regulated as follows. Allosterically activated by benzodiazepines. Activated by pentobarbital. Inhibited by the antagonist bicuculline. Inhibited by zinc ions. Potentiated by histamine. Its function is as follows. Gamma subunit of the heteropentameric ligand-gated chloride channel gated by gamma-aminobutyric acid (GABA), a major inhibitory neurotransmitter in the brain. GABA-gated chloride channels, also named GABA(A) receptors (GABAAR), consist of five subunits arranged around a central pore and contain GABA active binding site(s) located at the alpha and beta subunit interface(s). When activated by GABA, GABAARs selectively allow the flow of chloride anions across the cell membrane down their electrochemical gradient. Gamma-2/GABRG2-containing GABAARs are found at both synaptic and extrasynaptic sites. Chloride influx into the postsynaptic neuron following GABAAR opening decreases the neuron ability to generate a new action potential, thereby reducing nerve transmission. GABAARs containing alpha-1 and beta-2 or -3 subunits exhibit synaptogenic activity; the gamma-2 subunit being necessary but not sufficient to induce rapid synaptic contacts formation. Extrasynaptic gamma-2-containing receptors contribute to the tonic GABAergic inhibition. GABAARs function also as histamine receptor where histamine binds at the interface of two neighboring beta subunits and potentiates GABA response in a gamma-2 subunit-controlled manner. This is Gamma-aminobutyric acid receptor subunit gamma-2 from Mus musculus (Mouse).